Consider the following 128-residue polypeptide: Early E3 14.5 kDa protein (128 aa).

The protein belongs to the adenoviridae E3_15 family.

Its function is as follows. Protects virus-infected cells from TNF-induced cytolysis. In Human adenovirus C serotype 5 (HAdV-5), this protein is Early E3 14.5 kDa protein.